The sequence spans 461 residues: tRNA modification GTPase MnmE (461 aa).

(6S)-5-formyl-5,6,7,8-tetrahydrofolate-binding residues include lysine 32, glutamate 89, and lysine 128. Residues 224–387 (GHALSIVGKP…LGQKISAFFP (164 aa)) enclose the TrmE-type G domain. Asparagine 234 is a binding site for K(+). GTP-binding positions include 234 to 239 (NAGKSS), 253 to 259 (SDIKGTT), and 278 to 281 (DTAG). Mg(2+) is bound at residue serine 238. K(+)-binding residues include serine 253, isoleucine 255, and threonine 258. Position 259 (threonine 259) interacts with Mg(2+). Lysine 461 contributes to the (6S)-5-formyl-5,6,7,8-tetrahydrofolate binding site.

This sequence belongs to the TRAFAC class TrmE-Era-EngA-EngB-Septin-like GTPase superfamily. TrmE GTPase family. Homodimer. Heterotetramer of two MnmE and two MnmG subunits. Requires K(+) as cofactor.

The protein resides in the cytoplasm. Exhibits a very high intrinsic GTPase hydrolysis rate. Involved in the addition of a carboxymethylaminomethyl (cmnm) group at the wobble position (U34) of certain tRNAs, forming tRNA-cmnm(5)s(2)U34. In Helicobacter pylori (strain HPAG1), this protein is tRNA modification GTPase MnmE.